The primary structure comprises 492 residues: MNLKLFNPLILTSLTPLIGVFILLLIPSAKEKLCRNFALWISCLTFLFSLLLWIQFNSGTSFFQFSTTFLWFPFFNLYYTIGIDGISLFFILLTTLLIISCILVSWSSIQTNLKDYLICFLILEFLLIQVFSVLDLLLFYIYFESVLIPMFLIVGVWGSRQRKIRAAYQFFLYTLIGSLLMLLALLNIYFQTGTTDLQILWYIQFSEISQIFLWLSFFASFAVKIPMIPFHIWLPEAHAEAPTAGSVILAGILLKMGGYGFLRFSLPMFPVASIFFTPFIFTLSLVAIIYASLTTLRQIDLKKIIAYSSVSHMGFVTIGIFSLNIQGIEGSILLMLSHGLVSSALFLCIGVLYDRYKTRVIKYYSGLIQVMPLFGVFFLFFTFANLGFPGTSSFIGEVLVLLSSFQINKTLTLFASLGMIFGAAYSIWLFNRIIFGSLKLGYFSSFQDISRREFWILIPLAILILWMGIYPNSFLNEIHFSSVNLLELISHT.

15 consecutive transmembrane segments (helical) span residues 9 to 29 (LILTSLTPLIGVFILLLIPSA), 36 to 56 (NFALWISCLTFLFSLLLWIQF), 63 to 83 (FQFSTTFLWFPFFNLYYTIGI), 86 to 106 (ISLFFILLTTLLIISCILVSW), 115 to 135 (DYLICFLILEFLLIQVFSVLD), 136 to 156 (LLLFYIYFESVLIPMFLIVGV), 170 to 190 (FFLYTLIGSLLMLLALLNIYF), 211 to 231 (IFLWLSFFASFAVKIPMIPFH), 242 to 262 (PTAGSVILAGILLKMGGYGFL), 269 to 289 (FPVASIFFTPFIFTLSLVAII), 304 to 324 (IIAYSSVSHMGFVTIGIFSLN), 332 to 352 (ILLMLSHGLVSSALFLCIGVL), 370 to 390 (VMPLFGVFFLFFTFANLGFPG), 410 to 430 (TLTLFASLGMIFGAAYSIWLF), and 454 to 474 (FWILIPLAILILWMGIYPNSF).

It belongs to the complex I subunit 4 family.

The protein localises to the mitochondrion membrane. The enzyme catalyses a ubiquinone + NADH + 5 H(+)(in) = a ubiquinol + NAD(+) + 4 H(+)(out). Core subunit of the mitochondrial membrane respiratory chain NADH dehydrogenase (Complex I) that is believed to belong to the minimal assembly required for catalysis. Complex I functions in the transfer of electrons from NADH to the respiratory chain. The immediate electron acceptor for the enzyme is believed to be ubiquinone. This is NADH-ubiquinone oxidoreductase chain 4 (ND4) from Chondrus crispus (Carrageen Irish moss).